Reading from the N-terminus, the 566-residue chain is Putative ABC transporter ATP-binding protein lp_0149 (566 aa).

ABC transporter domains lie at 6–247 (ISFK…GLRE) and 302–536 (LAIE…ASLA). ATP-binding positions include 40–47 (GPSGSGKS) and 335–342 (GQNGTGKS).

It belongs to the ABC transporter superfamily.

The protein localises to the cell membrane. In terms of biological role, probably part of an ABC transporter complex. Responsible for energy coupling to the transport system. In Lactiplantibacillus plantarum (strain ATCC BAA-793 / NCIMB 8826 / WCFS1) (Lactobacillus plantarum), this protein is Putative ABC transporter ATP-binding protein lp_0149.